The primary structure comprises 393 residues: MDMLKENVIQNNEARTESSVEPSHPDMMETVPEEQQKPISHIDDLLSETANLMAVKEQLLKEIAENEHIHSMQMRALQNLPQEAILPLQYHADPRRRHRMQKPESYKTVICQAWLESKTCAFAENCRFAHGEEELRPSLIEARQNNKYRTKLCDKYTTTGLCPYGKRCLFIHPDNGPNAYIRADKLFEVSQRHALADLRDQMEHHIMNGGRSTAGPQQFDMFARPCTPDEPAANMPLGPTPVSIRGPRYELPSKKPLETEEAGNRPPSSWPLDPSTFFALDSLNMATRPISPFESMLIGAAGNMQYSMLGKQSTPGGVSGYSSSGSTPSQDSDSSPLTAASAAADAACQANSESAQSILLKSINNPMIGNETTLPIPGLDQLAMDIAKHLELW.

Residues 1–26 (MDMLKENVIQNNEARTESSVEPSHPD) are disordered. The segment covering 14 to 26 (ARTESSVEPSHPD) has biased composition (basic and acidic residues). C3H1-type zinc fingers lie at residues 105-133 (SYKT…HGEE) and 147-175 (KYRT…HPDN). 2 disordered regions span residues 227–251 (TPDE…RYEL) and 311–340 (KQST…LTAA). Residues 313 to 340 (STPGGVSGYSSSGSTPSQDSDSSPLTAA) are compositionally biased toward low complexity. Position 327 is a phosphothreonine; by GSK3 (Thr327).

Exclusively expressed in the hermaphrodite gonad. Expression only in cellulized oocytes. Widely distributed throughout gonadal oocytes from the mitotic stage to the developing diakinesis stage.

The protein resides in the cytoplasm. It localises to the cytoplasmic granule. It is found in the cytoskeleton. The protein localises to the microtubule organizing center. Its subcellular location is the centrosome. Zinc-finger RNA-binding protein that binds to 5'-UA[AU]-3' motifs in the 3'-UTR of maternal mRNAs to suppress translation in oocytes and embryos. Acts redundantly with oma-1 to control the temporal expression and distribution of maternal proteins and thereby promote meiotic progression, oocyte maturation, fertilization and embryonic development. Also, together with oma-1, is involved in P-granule distribution during embryonic development. This is CCCH-type zinc finger protein oma-2 from Caenorhabditis elegans.